Consider the following 385-residue polypeptide: GDP-mannose-dependent alpha-(1-6)-phosphatidylinositol monomannoside mannosyltransferase (385 aa).

Residues Arg-205, Lys-210, Val-262, and Glu-299 each coordinate GDP-alpha-D-mannose.

The protein belongs to the glycosyltransferase group 1 family. Glycosyltransferase 4 subfamily.

The enzyme catalyses a 1,2-diacyl-sn-glycero-3-phospho-[alpha-D-mannopyranosyl-(1&lt;-&gt;6)-D-myo-inositol] + GDP-alpha-D-mannose = a 2,6-O-bis(alpha-D-mannopyranosyl)-1-phosphatidyl-1D-myo-inositol + GDP + H(+). It catalyses the reaction a 1,2-diacyl-sn-glycero-3-phospho-[alpha-D-6-acyl-mannopyranosyl-(1&lt;-&gt;6)-D-myo-inositol] + GDP-alpha-D-mannose = a 2-O-(alpha-D-mannosyl)-6-O-(6-O-acyl-alpha-D-mannosyl)-1-phosphatidyl-1D-myo-inositol + GDP + H(+). It participates in phospholipid metabolism; phosphatidylinositol metabolism. Functionally, involved in the biosynthesis of phosphatidyl-myo-inositol mannosides (PIM) which are early precursors in the biosynthesis of lipomannans (LM) and lipoarabinomannans (LAM). Catalyzes the addition of a mannosyl residue from GDP-D-mannose (GDP-Man) to the position 6 of a phosphatidyl-myo-inositol bearing an alpha-1,2-linked mannose residue (PIM1) to generate phosphatidyl-myo-inositol bearing alpha-1,2- and alpha-1,6-linked mannose residues (Ac1PIM2). PimB also catalyzes the addition of a mannosyl residue from GDP-Man to the position 6 of phosphatidyl-myo-inositol bearing an acylated alpha-1,2-linked mannose residue (Ac1PIM1) to generate monoacylated phosphatidyl-myo-inositol bearing alpha-1,2- and alpha-1,6-linked mannose residues (Ac1PIM2). The addition of the second mannosyl residue by PimB preferentially occurs before the acylation of the mannosyl residue transferred by PimA. Also able to transfer a mannosyl residue from GDP-Man to the position 6 of a phosphatidyl-myo-inositol (PI), but this reaction is very slow. This Mycobacterium tuberculosis (strain CDC 1551 / Oshkosh) protein is GDP-mannose-dependent alpha-(1-6)-phosphatidylinositol monomannoside mannosyltransferase.